The primary structure comprises 158 residues: Flagellar assembly factor FliW (158 aa).

Belongs to the FliW family. As to quaternary structure, interacts with translational regulator CsrA and flagellin(s).

It is found in the cytoplasm. Functionally, acts as an anti-CsrA protein, binds CsrA and prevents it from repressing translation of its target genes, one of which is flagellin. Binds to flagellin and participates in the assembly of the flagellum. The protein is Flagellar assembly factor FliW of Moorella thermoacetica (strain ATCC 39073 / JCM 9320).